Consider the following 92-residue polypeptide: Elongation factor 1-beta (92 aa).

The protein belongs to the EF-1-beta/EF-1-delta family.

In terms of biological role, promotes the exchange of GDP for GTP in EF-1-alpha/GDP, thus allowing the regeneration of EF-1-alpha/GTP that could then be used to form the ternary complex EF-1-alpha/GTP/AAtRNA. This is Elongation factor 1-beta from Pyrobaculum calidifontis (strain DSM 21063 / JCM 11548 / VA1).